The sequence spans 314 residues: Ribosomal RNA large subunit methyltransferase F (314 aa).

The protein belongs to the methyltransferase superfamily. METTL16/RlmF family.

It localises to the cytoplasm. The enzyme catalyses adenosine(1618) in 23S rRNA + S-adenosyl-L-methionine = N(6)-methyladenosine(1618) in 23S rRNA + S-adenosyl-L-homocysteine + H(+). In terms of biological role, specifically methylates the adenine in position 1618 of 23S rRNA. In Flavobacterium psychrophilum (strain ATCC 49511 / DSM 21280 / CIP 103535 / JIP02/86), this protein is Ribosomal RNA large subunit methyltransferase F.